Here is a 156-residue protein sequence, read N- to C-terminus: ATP synthase subunit b (156 aa).

A helical membrane pass occupies residues 7-27 (LIVQMLVFVVFIGLTMKFIWP).

It belongs to the ATPase B chain family. In terms of assembly, F-type ATPases have 2 components, F(1) - the catalytic core - and F(0) - the membrane proton channel. F(1) has five subunits: alpha(3), beta(3), gamma(1), delta(1), epsilon(1). F(0) has three main subunits: a(1), b(2) and c(10-14). The alpha and beta chains form an alternating ring which encloses part of the gamma chain. F(1) is attached to F(0) by a central stalk formed by the gamma and epsilon chains, while a peripheral stalk is formed by the delta and b chains.

It localises to the cell inner membrane. Functionally, f(1)F(0) ATP synthase produces ATP from ADP in the presence of a proton or sodium gradient. F-type ATPases consist of two structural domains, F(1) containing the extramembraneous catalytic core and F(0) containing the membrane proton channel, linked together by a central stalk and a peripheral stalk. During catalysis, ATP synthesis in the catalytic domain of F(1) is coupled via a rotary mechanism of the central stalk subunits to proton translocation. Component of the F(0) channel, it forms part of the peripheral stalk, linking F(1) to F(0). This is ATP synthase subunit b from Coxiella burnetii (strain CbuK_Q154) (Coxiella burnetii (strain Q154)).